A 250-amino-acid chain; its full sequence is Beta-lactamase HcpA (250 aa).

The first 25 residues, 1 to 25 (MLGSVKKTLFGVLCLGALCLRGLMA), serve as a signal peptide directing secretion. TPR repeat units follow at residues 29 to 62 (AKEL…KEGF), 67 to 98 (LGAF…NDGY), 100 to 133 (CRLL…LNHA), 134 to 169 (EGCT…LKDS), and 170 to 202 (PGCI…KDGR). Intrachain disulfides connect cysteine 56-cysteine 64, cysteine 92-cysteine 100, cysteine 128-cysteine 136, cysteine 164-cysteine 172, cysteine 196-cysteine 204, and cysteine 232-cysteine 240.

Belongs to the hcp beta-lactamase family.

It localises to the secreted. It carries out the reaction a beta-lactam + H2O = a substituted beta-amino acid. With respect to regulation, inhibited by cloxacillin and oxacillin but not by ACA derivatives or metal chelators. Its function is as follows. Slowly hydrolyzes 6-aminopenicillinic acid and 7-aminocephalosporanic acid (ACA) derivatives. May be involved in the synthesis of the cell wall peptidoglycan. In Helicobacter pylori (strain J99 / ATCC 700824) (Campylobacter pylori J99), this protein is Beta-lactamase HcpA (hcpA).